Here is a 442-residue protein sequence, read N- to C-terminus: tRNA-2-methylthio-N(6)-dimethylallyladenosine synthase (442 aa).

Residues 2–120 (KKVFIRTFGC…LPKMIVDKET (119 aa)) enclose the MTTase N-terminal domain. Cysteine 11, cysteine 49, cysteine 83, cysteine 157, cysteine 161, and cysteine 164 together coordinate [4Fe-4S] cluster. The region spanning 143 to 375 (RVEGGAAFVS…NEVIEAETAR (233 aa)) is the Radical SAM core domain. The TRAM domain occupies 378-441 (QTMIGTVQRC…TFSLRGKIVE (64 aa)).

Belongs to the methylthiotransferase family. MiaB subfamily. Monomer. The cofactor is [4Fe-4S] cluster.

The protein resides in the cytoplasm. It catalyses the reaction N(6)-dimethylallyladenosine(37) in tRNA + (sulfur carrier)-SH + AH2 + 2 S-adenosyl-L-methionine = 2-methylsulfanyl-N(6)-dimethylallyladenosine(37) in tRNA + (sulfur carrier)-H + 5'-deoxyadenosine + L-methionine + A + S-adenosyl-L-homocysteine + 2 H(+). In terms of biological role, catalyzes the methylthiolation of N6-(dimethylallyl)adenosine (i(6)A), leading to the formation of 2-methylthio-N6-(dimethylallyl)adenosine (ms(2)i(6)A) at position 37 in tRNAs that read codons beginning with uridine. This Neisseria gonorrhoeae (strain ATCC 700825 / FA 1090) protein is tRNA-2-methylthio-N(6)-dimethylallyladenosine synthase.